Reading from the N-terminus, the 397-residue chain is Succinyl-diaminopimelate desuccinylase (397 aa).

Position 73 (His-73) interacts with Zn(2+). Asp-75 is an active-site residue. Asp-106 is a binding site for Zn(2+). Glu-140 functions as the Proton acceptor in the catalytic mechanism. Residues Glu-141, Glu-169, and His-366 each coordinate Zn(2+).

It belongs to the peptidase M20A family. DapE subfamily. As to quaternary structure, homodimer. The cofactor is Zn(2+). Co(2+) serves as cofactor.

It catalyses the reaction N-succinyl-(2S,6S)-2,6-diaminopimelate + H2O = (2S,6S)-2,6-diaminopimelate + succinate. It functions in the pathway amino-acid biosynthesis; L-lysine biosynthesis via DAP pathway; LL-2,6-diaminopimelate from (S)-tetrahydrodipicolinate (succinylase route): step 3/3. Catalyzes the hydrolysis of N-succinyl-L,L-diaminopimelic acid (SDAP), forming succinate and LL-2,6-diaminopimelate (DAP), an intermediate involved in the bacterial biosynthesis of lysine and meso-diaminopimelic acid, an essential component of bacterial cell walls. The chain is Succinyl-diaminopimelate desuccinylase from Rhizobium rhizogenes (strain K84 / ATCC BAA-868) (Agrobacterium radiobacter).